Consider the following 363-residue polypeptide: Galactokinase (363 aa).

16–19 (EHTD) lines the substrate pocket. ATP-binding positions include Ser-50 and 103 to 109 (GSGLSSS). Ser-109 and Glu-141 together coordinate Mg(2+). Catalysis depends on Asp-153, which acts as the Proton acceptor. Tyr-205 contributes to the substrate binding site.

The protein belongs to the GHMP kinase family. GalK subfamily.

It localises to the cytoplasm. It carries out the reaction alpha-D-galactose + ATP = alpha-D-galactose 1-phosphate + ADP + H(+). Its pathway is carbohydrate metabolism; galactose metabolism. Functionally, catalyzes the transfer of the gamma-phosphate of ATP to D-galactose to form alpha-D-galactose-1-phosphate (Gal-1-P). This is Galactokinase from Mycobacterium bovis (strain ATCC BAA-935 / AF2122/97).